The primary structure comprises 257 residues: Na(+)-translocating NADH-quinone reductase subunit C (257 aa).

The chain crosses the membrane as a helical span at residues 13–33; it reads LTVVVLLSLICSLIVASAAVL. Thr224 carries the FMN phosphoryl threonine modification.

Belongs to the NqrC family. In terms of assembly, composed of six subunits; NqrA, NqrB, NqrC, NqrD, NqrE and NqrF. FMN is required as a cofactor.

The protein localises to the cell inner membrane. It carries out the reaction a ubiquinone + n Na(+)(in) + NADH + H(+) = a ubiquinol + n Na(+)(out) + NAD(+). In terms of biological role, NQR complex catalyzes the reduction of ubiquinone-1 to ubiquinol by two successive reactions, coupled with the transport of Na(+) ions from the cytoplasm to the periplasm. NqrA to NqrE are probably involved in the second step, the conversion of ubisemiquinone to ubiquinol. In Haemophilus ducreyi (strain 35000HP / ATCC 700724), this protein is Na(+)-translocating NADH-quinone reductase subunit C.